Reading from the N-terminus, the 233-residue chain is uncharacterized protein (233 aa).

This sequence belongs to the RHS family.

This is an uncharacterized protein from Escherichia coli (strain K12).